The chain runs to 309 residues: tRNA-cytidine(32) 2-sulfurtransferase (309 aa).

The short motif at 45–50 is the PP-loop motif element; that stretch reads SGGKDS. Residues cysteine 120, cysteine 123, and cysteine 211 each contribute to the [4Fe-4S] cluster site.

This sequence belongs to the TtcA family. Homodimer. The cofactor is Mg(2+). [4Fe-4S] cluster is required as a cofactor.

The protein localises to the cytoplasm. It catalyses the reaction cytidine(32) in tRNA + S-sulfanyl-L-cysteinyl-[cysteine desulfurase] + AH2 + ATP = 2-thiocytidine(32) in tRNA + L-cysteinyl-[cysteine desulfurase] + A + AMP + diphosphate + H(+). It functions in the pathway tRNA modification. In terms of biological role, catalyzes the ATP-dependent 2-thiolation of cytidine in position 32 of tRNA, to form 2-thiocytidine (s(2)C32). The sulfur atoms are provided by the cysteine/cysteine desulfurase (IscS) system. This chain is tRNA-cytidine(32) 2-sulfurtransferase, found in Psychromonas ingrahamii (strain DSM 17664 / CCUG 51855 / 37).